The sequence spans 652 residues: DNA ligase (652 aa).

NAD(+) contacts are provided by residues 29-33, 78-79, and Glu-107; these read DAEYD and SL. Lys-109 functions as the N6-AMP-lysine intermediate in the catalytic mechanism. The NAD(+) site is built by Arg-130, Glu-164, Lys-278, and Lys-302. Residues Cys-395, Cys-398, Cys-413, and Cys-418 each contribute to the Zn(2+) site. One can recognise a BRCT domain in the interval 577 to 652; sequence DENAALSGMT…IKDEAWLESL (76 aa).

The protein belongs to the NAD-dependent DNA ligase family. LigA subfamily. Mg(2+) is required as a cofactor. The cofactor is Mn(2+).

The catalysed reaction is NAD(+) + (deoxyribonucleotide)n-3'-hydroxyl + 5'-phospho-(deoxyribonucleotide)m = (deoxyribonucleotide)n+m + AMP + beta-nicotinamide D-nucleotide.. In terms of biological role, DNA ligase that catalyzes the formation of phosphodiester linkages between 5'-phosphoryl and 3'-hydroxyl groups in double-stranded DNA using NAD as a coenzyme and as the energy source for the reaction. It is essential for DNA replication and repair of damaged DNA. The polypeptide is DNA ligase (Streptococcus suis (strain 05ZYH33)).